The following is a 562-amino-acid chain: Glutamate--tRNA ligase (562 aa).

Positions 90 to 100 (PNPSGLLHIGH) match the 'HIGH' region motif.

This sequence belongs to the class-I aminoacyl-tRNA synthetase family. Glutamate--tRNA ligase type 2 subfamily.

It is found in the cytoplasm. The catalysed reaction is tRNA(Glu) + L-glutamate + ATP = L-glutamyl-tRNA(Glu) + AMP + diphosphate. Catalyzes the attachment of glutamate to tRNA(Glu) in a two-step reaction: glutamate is first activated by ATP to form Glu-AMP and then transferred to the acceptor end of tRNA(Glu). The polypeptide is Glutamate--tRNA ligase (Nanoarchaeum equitans (strain Kin4-M)).